Reading from the N-terminus, the 341-residue chain is Phosphatidylserine decarboxylase proenzyme (341 aa).

Active-site charge relay system; for autoendoproteolytic cleavage activity residues include aspartate 90, histidine 147, and serine 254. Residue serine 254 is the Schiff-base intermediate with substrate; via pyruvic acid; for decarboxylase activity of the active site. At serine 254 the chain carries Pyruvic acid (Ser); by autocatalysis. A disordered region spans residues 287-341; the sequence is RQDEQTPVVFPEGTELEENDAAQPPVAATSEPVQADGQNPAAEVSGQTGHKPDAP.

The protein belongs to the phosphatidylserine decarboxylase family. PSD-B subfamily. Prokaryotic type I sub-subfamily. As to quaternary structure, heterodimer of a large membrane-associated beta subunit and a small pyruvoyl-containing alpha subunit. Pyruvate serves as cofactor. Post-translationally, is synthesized initially as an inactive proenzyme. Formation of the active enzyme involves a self-maturation process in which the active site pyruvoyl group is generated from an internal serine residue via an autocatalytic post-translational modification. Two non-identical subunits are generated from the proenzyme in this reaction, and the pyruvate is formed at the N-terminus of the alpha chain, which is derived from the carboxyl end of the proenzyme. The autoendoproteolytic cleavage occurs by a canonical serine protease mechanism, in which the side chain hydroxyl group of the serine supplies its oxygen atom to form the C-terminus of the beta chain, while the remainder of the serine residue undergoes an oxidative deamination to produce ammonia and the pyruvoyl prosthetic group on the alpha chain. During this reaction, the Ser that is part of the protease active site of the proenzyme becomes the pyruvoyl prosthetic group, which constitutes an essential element of the active site of the mature decarboxylase.

It is found in the cell membrane. The enzyme catalyses a 1,2-diacyl-sn-glycero-3-phospho-L-serine + H(+) = a 1,2-diacyl-sn-glycero-3-phosphoethanolamine + CO2. It functions in the pathway phospholipid metabolism; phosphatidylethanolamine biosynthesis; phosphatidylethanolamine from CDP-diacylglycerol: step 2/2. Catalyzes the formation of phosphatidylethanolamine (PtdEtn) from phosphatidylserine (PtdSer). In Pectobacterium atrosepticum (strain SCRI 1043 / ATCC BAA-672) (Erwinia carotovora subsp. atroseptica), this protein is Phosphatidylserine decarboxylase proenzyme.